Reading from the N-terminus, the 337-residue chain is RNA 3'-terminal phosphate cyclase (337 aa).

ATP-binding positions include Q101 and 282-285 (HMSD). H306 functions as the Tele-AMP-histidine intermediate in the catalytic mechanism.

This sequence belongs to the RNA 3'-terminal cyclase family. Type 1 subfamily.

It is found in the cytoplasm. The enzyme catalyses a 3'-end 3'-phospho-ribonucleotide-RNA + ATP = a 3'-end 2',3'-cyclophospho-ribonucleotide-RNA + AMP + diphosphate. Functionally, catalyzes the conversion of 3'-phosphate to a 2',3'-cyclic phosphodiester at the end of RNA. The mechanism of action of the enzyme occurs in 3 steps: (A) adenylation of the enzyme by ATP; (B) transfer of adenylate to an RNA-N3'P to produce RNA-N3'PP5'A; (C) and attack of the adjacent 2'-hydroxyl on the 3'-phosphorus in the diester linkage to produce the cyclic end product. The biological role of this enzyme is unknown but it is likely to function in some aspects of cellular RNA processing. This is RNA 3'-terminal phosphate cyclase from Saccharolobus islandicus (strain M.16.27) (Sulfolobus islandicus).